The sequence spans 438 residues: tRNA modification GTPase MnmE (438 aa).

Residues R20, E78, and K117 each contribute to the (6S)-5-formyl-5,6,7,8-tetrahydrofolate site. The 146-residue stretch at 214–359 (GIRVLIIGKP…LIDEIKKLFY (146 aa)) folds into the TrmE-type G domain. N224 is a K(+) binding site. GTP-binding positions include 224-229 (NVGKST), 243-249 (TDIPGTT), and 268-271 (DTAG). Mg(2+) is bound at residue S228. K(+)-binding residues include T243, I245, and T248. T249 provides a ligand contact to Mg(2+). K438 contacts (6S)-5-formyl-5,6,7,8-tetrahydrofolate.

The protein belongs to the TRAFAC class TrmE-Era-EngA-EngB-Septin-like GTPase superfamily. TrmE GTPase family. In terms of assembly, homodimer. Heterotetramer of two MnmE and two MnmG subunits. K(+) serves as cofactor.

The protein localises to the cytoplasm. Its function is as follows. Exhibits a very high intrinsic GTPase hydrolysis rate. Involved in the addition of a carboxymethylaminomethyl (cmnm) group at the wobble position (U34) of certain tRNAs, forming tRNA-cmnm(5)s(2)U34. This is tRNA modification GTPase MnmE from Ureaplasma parvum serovar 3 (strain ATCC 27815 / 27 / NCTC 11736).